The primary structure comprises 68 residues: uncharacterized protein (68 aa).

Residues 1 to 21 (MELYREYPAWLIFLRRTYAVA) form the signal peptide.

This is an uncharacterized protein from Escherichia coli O157:H7.